Consider the following 77-residue polypeptide: MSLFDFFKNKGSAATATDRLKLILAKERTLNLPYMEEMRKEIIAVIQKYTKSSDIHFKTIDGNQSVETIEVEIILPK.

This sequence belongs to the MinE family.

Prevents the cell division inhibition by proteins MinC and MinD at internal division sites while permitting inhibition at polar sites. This ensures cell division at the proper site by restricting the formation of a division septum at the midpoint of the long axis of the cell. This is Cell division topological specificity factor from Helicobacter pylori (strain Shi470).